The following is a 178-amino-acid chain: Probable DNA-directed RNA polymerase subunit delta (178 aa).

The 68-residue stretch at 14–81 (LSMIEVAHAI…GENTWGLRTW (68 aa)) folds into the HTH HARE-type domain. Positions 120-143 (DDDVIDYDSDDPEDEEVEAEDTTS) are enriched in acidic residues. A disordered region spans residues 120-178 (DDDVIDYDSDDPEDEEVEAEDTTSDDAPAFEDLSNDDDTDVLPDGIEGQLSELNEDDEN).

This sequence belongs to the RpoE family. RNAP is composed of a core of 2 alpha, a beta and a beta' subunits. The core is associated with a delta subunit and one of several sigma factors.

Its function is as follows. Participates in both the initiation and recycling phases of transcription. In the presence of the delta subunit, RNAP displays an increased specificity of transcription, a decreased affinity for nucleic acids, and an increased efficiency of RNA synthesis because of enhanced recycling. The polypeptide is Probable DNA-directed RNA polymerase subunit delta (Pediococcus pentosaceus (strain ATCC 25745 / CCUG 21536 / LMG 10740 / 183-1w)).